The sequence spans 321 residues: Porphobilinogen deaminase (321 aa).

An S-(dipyrrolylmethanemethyl)cysteine modification is found at Cys-246.

Belongs to the HMBS family. Monomer. Dipyrromethane is required as a cofactor.

It catalyses the reaction 4 porphobilinogen + H2O = hydroxymethylbilane + 4 NH4(+). It functions in the pathway porphyrin-containing compound metabolism; protoporphyrin-IX biosynthesis; coproporphyrinogen-III from 5-aminolevulinate: step 2/4. Functionally, tetrapolymerization of the monopyrrole PBG into the hydroxymethylbilane pre-uroporphyrinogen in several discrete steps. The chain is Porphobilinogen deaminase from Helicobacter hepaticus (strain ATCC 51449 / 3B1).